Consider the following 847-residue polypeptide: UPF0182 protein CYB_0372 (847 aa).

A run of 7 helical transmembrane segments spans residues 7 to 27, 51 to 71, 76 to 96, 141 to 161, 168 to 188, 220 to 240, and 259 to 279; these read GLFL…LAAF, WGLG…NICS, ATLA…AGSL, FNLV…ELGL, LALS…LFLI, LPAT…FWAL, and WASS…FGLL.

This sequence belongs to the UPF0182 family.

The protein localises to the cell membrane. The sequence is that of UPF0182 protein CYB_0372 from Synechococcus sp. (strain JA-2-3B'a(2-13)) (Cyanobacteria bacterium Yellowstone B-Prime).